The chain runs to 127 residues: Glycine cleavage system H protein 2 (127 aa).

The Lipoyl-binding domain maps to 24–105 (SVTVGISDHA…PYGSWIFKLK (82 aa)). The residue at position 65 (lysine 65) is an N6-lipoyllysine.

The protein belongs to the GcvH family. As to quaternary structure, the glycine cleavage system is composed of four proteins: P, T, L and H. The cofactor is (R)-lipoate.

In terms of biological role, the glycine cleavage system catalyzes the degradation of glycine. The H protein shuttles the methylamine group of glycine from the P protein to the T protein. The sequence is that of Glycine cleavage system H protein 2 from Pseudomonas putida (strain ATCC 47054 / DSM 6125 / CFBP 8728 / NCIMB 11950 / KT2440).